Reading from the N-terminus, the 330-residue chain is Ketol-acid reductoisomerase (NADP(+)) (330 aa).

Residues 3-184 (LSVYYDKDID…GGGRMGVLET (182 aa)) enclose the KARI N-terminal Rossmann domain. NADP(+) is bound by residues 26–29 (YGTQ), Ser-52, and Ser-54. The active site involves His-109. Residue Gly-135 coordinates NADP(+). Positions 185-329 (SFKEECESDL…EILRTPFNHE (145 aa)) constitute a KARI C-terminal knotted domain. The Mg(2+) site is built by Asp-193, Glu-197, Glu-229, and Glu-233. Residue Ser-254 coordinates substrate.

Belongs to the ketol-acid reductoisomerase family. Mg(2+) serves as cofactor.

It carries out the reaction (2R)-2,3-dihydroxy-3-methylbutanoate + NADP(+) = (2S)-2-acetolactate + NADPH + H(+). It catalyses the reaction (2R,3R)-2,3-dihydroxy-3-methylpentanoate + NADP(+) = (S)-2-ethyl-2-hydroxy-3-oxobutanoate + NADPH + H(+). The protein operates within amino-acid biosynthesis; L-isoleucine biosynthesis; L-isoleucine from 2-oxobutanoate: step 2/4. It participates in amino-acid biosynthesis; L-valine biosynthesis; L-valine from pyruvate: step 2/4. Involved in the biosynthesis of branched-chain amino acids (BCAA). Catalyzes an alkyl-migration followed by a ketol-acid reduction of (S)-2-acetolactate (S2AL) to yield (R)-2,3-dihydroxy-isovalerate. In the isomerase reaction, S2AL is rearranged via a Mg-dependent methyl migration to produce 3-hydroxy-3-methyl-2-ketobutyrate (HMKB). In the reductase reaction, this 2-ketoacid undergoes a metal-dependent reduction by NADPH to yield (R)-2,3-dihydroxy-isovalerate. In Helicobacter acinonychis (strain Sheeba), this protein is Ketol-acid reductoisomerase (NADP(+)).